The following is a 110-amino-acid chain: Large ribosomal subunit protein uL22 (110 aa).

This sequence belongs to the universal ribosomal protein uL22 family. In terms of assembly, part of the 50S ribosomal subunit.

Functionally, this protein binds specifically to 23S rRNA; its binding is stimulated by other ribosomal proteins, e.g. L4, L17, and L20. It is important during the early stages of 50S assembly. It makes multiple contacts with different domains of the 23S rRNA in the assembled 50S subunit and ribosome. The globular domain of the protein is located near the polypeptide exit tunnel on the outside of the subunit, while an extended beta-hairpin is found that lines the wall of the exit tunnel in the center of the 70S ribosome. This Aliarcobacter butzleri (strain RM4018) (Arcobacter butzleri) protein is Large ribosomal subunit protein uL22.